Reading from the N-terminus, the 274-residue chain is 2,3,4,5-tetrahydropyridine-2,6-dicarboxylate N-succinyltransferase (274 aa).

Arginine 107 and aspartate 144 together coordinate substrate.

The protein belongs to the transferase hexapeptide repeat family. In terms of assembly, homotrimer.

Its subcellular location is the cytoplasm. It carries out the reaction (S)-2,3,4,5-tetrahydrodipicolinate + succinyl-CoA + H2O = (S)-2-succinylamino-6-oxoheptanedioate + CoA. It participates in amino-acid biosynthesis; L-lysine biosynthesis via DAP pathway; LL-2,6-diaminopimelate from (S)-tetrahydrodipicolinate (succinylase route): step 1/3. This Paracoccus denitrificans (strain Pd 1222) protein is 2,3,4,5-tetrahydropyridine-2,6-dicarboxylate N-succinyltransferase.